Reading from the N-terminus, the 81-residue chain is Photosystem I iron-sulfur center (81 aa).

2 consecutive 4Fe-4S ferredoxin-type domains span residues 2–31 (SHAV…MVPW) and 37–68 (GQIA…IRVY). Residues C11, C14, C17, C21, C48, C51, C54, and C58 each contribute to the [4Fe-4S] cluster site.

As to quaternary structure, the cyanobacterial PSI reaction center is composed of one copy each of PsaA,B,C,D,E,F,I,J,K,L,M and X, and forms trimeric complexes. Requires [4Fe-4S] cluster as cofactor.

The protein resides in the cellular thylakoid membrane. It carries out the reaction reduced [plastocyanin] + hnu + oxidized [2Fe-2S]-[ferredoxin] = oxidized [plastocyanin] + reduced [2Fe-2S]-[ferredoxin]. In terms of biological role, apoprotein for the two 4Fe-4S centers FA and FB of photosystem I (PSI); essential for photochemical activity. FB is the terminal electron acceptor of PSI, donating electrons to ferredoxin. The C-terminus interacts with PsaA/B/D and helps assemble the protein into the PSI complex. Required for binding of PsaD and PsaE to PSI. PSI is a plastocyanin/cytochrome c6-ferredoxin oxidoreductase, converting photonic excitation into a charge separation, which transfers an electron from the donor P700 chlorophyll pair to the spectroscopically characterized acceptors A0, A1, FX, FA and FB in turn. This is Photosystem I iron-sulfur center from Synechococcus sp. (strain WH8103).